A 62-amino-acid chain; its full sequence is DNA gyrase inhibitor YacG (62 aa).

Zn(2+)-binding residues include Cys-9, Cys-12, Cys-27, and Cys-31. Basic and acidic residues predominate over residues 43–52; the sequence is GYRIPGEKAP. A disordered region spans residues 43-62; sequence GYRIPGEKAPESGGEEPGDE.

Belongs to the DNA gyrase inhibitor YacG family. In terms of assembly, interacts with GyrB. Zn(2+) is required as a cofactor.

Its function is as follows. Inhibits all the catalytic activities of DNA gyrase by preventing its interaction with DNA. Acts by binding directly to the C-terminal domain of GyrB, which probably disrupts DNA binding by the gyrase. This chain is DNA gyrase inhibitor YacG, found in Geobacter sp. (strain M21).